A 432-amino-acid polypeptide reads, in one-letter code: Glycosyltransferase 6 (432 aa).

Topologically, residues 1–18 (MGKPGGAKTRTAVCLSDG) are cytoplasmic. A helical; Signal-anchor for type II membrane protein membrane pass occupies residues 19–39 (VFFLAGAFMSLTLVWSYFSIF). The Lumenal segment spans residues 40–432 (SPSFTSLRHD…LPFDYPNEAW (393 aa)). Asn-315 is a glycosylation site (N-linked (GlcNAc...) asparagine).

This sequence belongs to the glycosyltransferase 34 family.

The protein resides in the golgi apparatus membrane. Functionally, probable glycosyltransferase that may be involved in the biosynthesis of xyloglucan. In Arabidopsis thaliana (Mouse-ear cress), this protein is Glycosyltransferase 6 (GT6).